A 463-amino-acid chain; its full sequence is Chromosomal replication initiator protein DnaA (463 aa).

A domain I, interacts with DnaA modulators region spans residues 1 to 83 (MSTNQIILTD…LQLFQHYNNT (83 aa)). The segment at 83–124 (TIKSVEIITKELPGTSKTVIELPTKTFADIGSSELNAENIFS) is domain II. The domain III, AAA+ region stretch occupies residues 125–343 (TLDVRFTFDN…GALNKVIAHS (219 aa)). Positions 171, 173, 174, and 175 each coordinate ATP. The segment at 344–463 (NFTLKEITLE…INLLMKILQN (120 aa)) is domain IV, binds dsDNA.

Belongs to the DnaA family. In terms of assembly, oligomerizes as a right-handed, spiral filament on DNA at oriC.

It localises to the cytoplasm. Functionally, plays an essential role in the initiation and regulation of chromosomal replication. ATP-DnaA binds to the origin of replication (oriC) to initiate formation of the DNA replication initiation complex once per cell cycle. Binds the DnaA box (a 9 base pair repeat at the origin) and separates the double-stranded (ds)DNA. Forms a right-handed helical filament on oriC DNA; dsDNA binds to the exterior of the filament while single-stranded (ss)DNA is stabiized in the filament's interior. The ATP-DnaA-oriC complex binds and stabilizes one strand of the AT-rich DNA unwinding element (DUE), permitting loading of DNA polymerase. After initiation quickly degrades to an ADP-DnaA complex that is not apt for DNA replication. Binds acidic phospholipids. This is Chromosomal replication initiator protein DnaA from Rickettsia canadensis (strain McKiel).